The primary structure comprises 261 residues: NAD-capped RNA hydrolase NudC (261 aa).

Substrate is bound at residue Arg-74. Residues Cys-103, Cys-106, Cys-121, and Cys-124 each contribute to the Zn(2+) site. Tyr-129 provides a ligand contact to substrate. The Nudix hydrolase domain occupies 130–253; the sequence is PRIFPCIIVA…TIARALIEQT (124 aa). Residues Ala-163, Glu-179, and Glu-183 each coordinate a divalent metal cation. The Nudix box motif lies at 164–185; it reads GFVEVGETLEQCVAREVKEETG. 197–204 contacts substrate; that stretch reads QPWAFPSS. Residue Glu-224 participates in a divalent metal cation binding. Position 246 (Ala-246) interacts with substrate.

The protein belongs to the Nudix hydrolase family. NudC subfamily. As to quaternary structure, homodimer. It depends on Mg(2+) as a cofactor. Mn(2+) is required as a cofactor. Zn(2+) serves as cofactor.

It catalyses the reaction a 5'-end NAD(+)-phospho-ribonucleoside in mRNA + H2O = a 5'-end phospho-adenosine-phospho-ribonucleoside in mRNA + beta-nicotinamide D-ribonucleotide + 2 H(+). The enzyme catalyses NAD(+) + H2O = beta-nicotinamide D-ribonucleotide + AMP + 2 H(+). It carries out the reaction NADH + H2O = reduced beta-nicotinamide D-ribonucleotide + AMP + 2 H(+). MRNA decapping enzyme that specifically removes the nicotinamide adenine dinucleotide (NAD) cap from a subset of mRNAs by hydrolyzing the diphosphate linkage to produce nicotinamide mononucleotide (NMN) and 5' monophosphate mRNA. The NAD-cap is present at the 5'-end of some mRNAs and stabilizes RNA against 5'-processing. Has preference for mRNAs with a 5'-end purine. Catalyzes the hydrolysis of a broad range of dinucleotide pyrophosphates. The protein is NAD-capped RNA hydrolase NudC of Vibrio vulnificus (strain CMCP6).